The chain runs to 356 residues: Histidinol-phosphate aminotransferase (356 aa).

Lys-214 carries the N6-(pyridoxal phosphate)lysine modification.

This sequence belongs to the class-II pyridoxal-phosphate-dependent aminotransferase family. Histidinol-phosphate aminotransferase subfamily. In terms of assembly, homodimer. Pyridoxal 5'-phosphate serves as cofactor.

The enzyme catalyses L-histidinol phosphate + 2-oxoglutarate = 3-(imidazol-4-yl)-2-oxopropyl phosphate + L-glutamate. It participates in amino-acid biosynthesis; L-histidine biosynthesis; L-histidine from 5-phospho-alpha-D-ribose 1-diphosphate: step 7/9. In Escherichia coli (strain 55989 / EAEC), this protein is Histidinol-phosphate aminotransferase.